A 460-amino-acid polypeptide reads, in one-letter code: Serine--tRNA ligase (460 aa).

242–244 provides a ligand contact to L-serine; it reads TAE. ATP contacts are provided by residues 273–275 and Val289; that span reads RRE. Glu296 contributes to the L-serine binding site. 369-372 lines the ATP pocket; sequence EVSS. Ser405 lines the L-serine pocket.

It belongs to the class-II aminoacyl-tRNA synthetase family. Type-1 seryl-tRNA synthetase subfamily. Homodimer. The tRNA molecule binds across the dimer.

It is found in the cytoplasm. It catalyses the reaction tRNA(Ser) + L-serine + ATP = L-seryl-tRNA(Ser) + AMP + diphosphate + H(+). The enzyme catalyses tRNA(Sec) + L-serine + ATP = L-seryl-tRNA(Sec) + AMP + diphosphate + H(+). The protein operates within aminoacyl-tRNA biosynthesis; selenocysteinyl-tRNA(Sec) biosynthesis; L-seryl-tRNA(Sec) from L-serine and tRNA(Sec): step 1/1. Functionally, catalyzes the attachment of serine to tRNA(Ser). Is also able to aminoacylate tRNA(Sec) with serine, to form the misacylated tRNA L-seryl-tRNA(Sec), which will be further converted into selenocysteinyl-tRNA(Sec). The protein is Serine--tRNA ligase of Haloquadratum walsbyi (strain DSM 16790 / HBSQ001).